Reading from the N-terminus, the 352-residue chain is Pheromone-regulated membrane protein 6 (352 aa).

Residues 1–36 (MESSLQKLKFQDIDINLIPTAKWTTKLQYILYTWCQ) are Extracellular-facing. Residues 37–57 (SILHVAMFFSDIYTCIKLLAF) traverse the membrane as a helical segment. The Cytoplasmic segment spans residues 58 to 76 (NTWSNNIIQPFLEFRISKW). The chain crosses the membrane as a helical span at residues 77–97 (LFSGCILCSSLILIWELVIGL). Topologically, residues 98–227 (RVYRKKEITS…VILSFMLFSF (130 aa)) are extracellular. Residues 228-248 (IIWVILISKLILSIIIFIIFI) form a helical membrane-spanning segment. Residues 249 to 352 (RPRFLSSKRK…FPQKYKHKYI (104 aa)) lie on the Cytoplasmic side of the membrane.

This sequence belongs to the KCH1 low affinity K(+) transporter family.

Its subcellular location is the cell membrane. The protein resides in the bud tip. The protein localises to the vacuole lumen. The enzyme catalyses K(+)(in) = K(+)(out). Low affinity potassium transporter that, with KCH1, participates in high-affinity Ca(2+) influx system (HACS) activation during the response to mating pheromone. Directly promotes K(+) influx and HACS may electrochemically respond to this K(+) influx. KCH1 and PRM6/KCH2 act at the apex of the calcium signaling pathway that is used for survival during prolonged exposures to mating pheromones. In Saccharomyces cerevisiae (strain ATCC 204508 / S288c) (Baker's yeast), this protein is Pheromone-regulated membrane protein 6.